A 366-amino-acid chain; its full sequence is GTPase Obg (366 aa).

The Obg domain occupies 1–162 (MRFVDEAVIK…KSLRLELKIL (162 aa)). The interval 125–150 (RGGKGNEHFKSSTMQAPRFSQPGEPG) is disordered. The 173-residue stretch at 163–335 (ADAGLLGLPN…VVSEMWRMLA (173 aa)) folds into the OBG-type G domain. GTP contacts are provided by residues 169–176 (GLPNAGKS), 194–198 (FTTLV), 218–221 (DIPG), 288–291 (NKID), and 316–318 (SAL). Residues Ser176 and Thr196 each coordinate Mg(2+).

It belongs to the TRAFAC class OBG-HflX-like GTPase superfamily. OBG GTPase family. Monomer. It depends on Mg(2+) as a cofactor.

It is found in the cytoplasm. In terms of biological role, an essential GTPase which binds GTP, GDP and possibly (p)ppGpp with moderate affinity, with high nucleotide exchange rates and a fairly low GTP hydrolysis rate. Plays a role in control of the cell cycle, stress response, ribosome biogenesis and in those bacteria that undergo differentiation, in morphogenesis control. This is GTPase Obg from Oleidesulfovibrio alaskensis (strain ATCC BAA-1058 / DSM 17464 / G20) (Desulfovibrio alaskensis).